The primary structure comprises 692 residues: Threonine--tRNA ligase (692 aa).

The disordered stretch occupies residues 1–20 (MSAPAQPAPGVDGGDPSQAR). A TGS domain is found at 1 to 74 (MSAPAQPAPG…DVDTDITPVA (74 aa)). The tract at residues 269–575 (DHRKLGVELD…LTEHYAGAFP (307 aa)) is catalytic. Zn(2+) contacts are provided by C374, H425, and H552.

This sequence belongs to the class-II aminoacyl-tRNA synthetase family. As to quaternary structure, homodimer. The cofactor is Zn(2+).

The protein resides in the cytoplasm. The enzyme catalyses tRNA(Thr) + L-threonine + ATP = L-threonyl-tRNA(Thr) + AMP + diphosphate + H(+). In terms of biological role, catalyzes the attachment of threonine to tRNA(Thr) in a two-step reaction: L-threonine is first activated by ATP to form Thr-AMP and then transferred to the acceptor end of tRNA(Thr). Also edits incorrectly charged L-seryl-tRNA(Thr). This Mycobacterium tuberculosis (strain CDC 1551 / Oshkosh) protein is Threonine--tRNA ligase.